Here is a 268-residue protein sequence, read N- to C-terminus: 4-hydroxy-tetrahydrodipicolinate reductase (268 aa).

Position 8 to 13 (8 to 13 (GAAGRM)) interacts with NAD(+). Arg-36 serves as a coordination point for NADP(+). NAD(+) contacts are provided by residues 99-101 (GTT) and 123-126 (AANF). His-156 serves as the catalytic Proton donor/acceptor. His-157 is a binding site for (S)-2,3,4,5-tetrahydrodipicolinate. Lys-160 functions as the Proton donor in the catalytic mechanism. 166–167 (GT) is a (S)-2,3,4,5-tetrahydrodipicolinate binding site.

The protein belongs to the DapB family.

Its subcellular location is the cytoplasm. The catalysed reaction is (S)-2,3,4,5-tetrahydrodipicolinate + NAD(+) + H2O = (2S,4S)-4-hydroxy-2,3,4,5-tetrahydrodipicolinate + NADH + H(+). It carries out the reaction (S)-2,3,4,5-tetrahydrodipicolinate + NADP(+) + H2O = (2S,4S)-4-hydroxy-2,3,4,5-tetrahydrodipicolinate + NADPH + H(+). The protein operates within amino-acid biosynthesis; L-lysine biosynthesis via DAP pathway; (S)-tetrahydrodipicolinate from L-aspartate: step 4/4. Its function is as follows. Catalyzes the conversion of 4-hydroxy-tetrahydrodipicolinate (HTPA) to tetrahydrodipicolinate. In Pseudomonas fluorescens (strain SBW25), this protein is 4-hydroxy-tetrahydrodipicolinate reductase.